The sequence spans 299 residues: Hemolysin C homolog (299 aa).

2 consecutive CBS domains span residues 80-142 (MVPR…NGRL) and 145-202 (LIRK…IDDE).

It belongs to the UPF0053 family. Hemolysin C subfamily.

The sequence is that of Hemolysin C homolog (tlyC) from Rickettsia conorii (strain ATCC VR-613 / Malish 7).